The sequence spans 208 residues: MSHFLYLAPEIQLPFSPLTSTEFELIRRKARELWQNEARWSTSSVTTYSGSYREKQLDEASCHRLAQRFGQPHFEYKPAPLPGGSAYNALPGQAGSQEAADGKGRLPDITSPSQDSTLNIKHKVAHQSWSSGTSRPTCLAYRPRHLSPSSKPKRPGFELLMSYRNRGRKLLRQLQRQWDYENKLGSSDDSDTDRFSSVTSGSSRRKFK.

3 disordered regions span residues 91–115 (PGQA…PSQD), 127–156 (QSWS…KRPG), and 182–208 (NKLG…RKFK). Residues 127-136 (QSWSSGTSRP) show a composition bias toward polar residues.

This is an uncharacterized protein from Rattus norvegicus (Rat).